Here is a 274-residue protein sequence, read N- to C-terminus: Proteasome subunit beta type-7-B (274 aa).

The propeptide at 1 to 37 (MSQSSVDIPPKGGFSFDLCKRNDMLTQKGLKAPSFLK) is removed in mature form. Thr-40 serves as the catalytic Nucleophile.

The protein belongs to the peptidase T1B family. In terms of assembly, component of the 20S core complex of the 26S proteasome. The 26S proteasome is composed of a core protease (CP), known as the 20S proteasome, capped at one or both ends by the 19S regulatory particle (RP/PA700). The 20S proteasome core is composed of 28 subunits that are arranged in four stacked rings, resulting in a barrel-shaped structure. The two end rings are each formed by seven alpha subunits, and the two central rings are each formed by seven beta subunits. The catalytic chamber with the active sites is on the inside of the barrel.

The protein localises to the cytoplasm. The protein resides in the nucleus. It catalyses the reaction Cleavage of peptide bonds with very broad specificity.. In terms of biological role, the proteasome is a multicatalytic proteinase complex which is characterized by its ability to cleave peptides with Arg, Phe, Tyr, Leu, and Glu adjacent to the leaving group at neutral or slightly basic pH. The proteasome has an ATP-dependent proteolytic activity. The protein is Proteasome subunit beta type-7-B (PBB2) of Arabidopsis thaliana (Mouse-ear cress).